Reading from the N-terminus, the 129-residue chain is Small ribosomal subunit protein uS9 (129 aa).

The protein belongs to the universal ribosomal protein uS9 family.

This is Small ribosomal subunit protein uS9 from Nitratiruptor sp. (strain SB155-2).